We begin with the raw amino-acid sequence, 540 residues long: Chaperonin GroEL 1 (540 aa).

ATP contacts are provided by residues 30 to 33 (TLGP), Lys51, 87 to 91 (DGTTT), Gly415, 480 to 482 (NAA), and Asp496.

Belongs to the chaperonin (HSP60) family. In terms of assembly, forms a cylinder of 14 subunits composed of two heptameric rings stacked back-to-back. Interacts with the co-chaperonin GroES.

Its subcellular location is the cytoplasm. The catalysed reaction is ATP + H2O + a folded polypeptide = ADP + phosphate + an unfolded polypeptide.. Its function is as follows. Together with its co-chaperonin GroES, plays an essential role in assisting protein folding. The GroEL-GroES system forms a nano-cage that allows encapsulation of the non-native substrate proteins and provides a physical environment optimized to promote and accelerate protein folding. This Bradyrhizobium diazoefficiens (strain JCM 10833 / BCRC 13528 / IAM 13628 / NBRC 14792 / USDA 110) protein is Chaperonin GroEL 1.